The sequence spans 303 residues: D-alanyl-D-alanine carboxypeptidase (303 aa).

The helical transmembrane segment at 7–23 threads the bilayer; it reads LLLLLFLIYLGYDYVNE. Positions 37–56 are disordered; it reads DQNPKEHLENSGTSENTQEK. Substrate is bound by residues 154-156 and Ser161; that span reads YAL. Residues His163 and Asp170 each contribute to the Zn(2+) site. The active-site Proton donor/acceptor is Glu213. His216 contributes to the Zn(2+) binding site.

Belongs to the peptidase M15B family. Requires Zn(2+) as cofactor.

It localises to the cell membrane. With respect to regulation, the DD-carboxypeptidase activity is not inhibited by beta-lactam antibiotics. Its function is as follows. Cleaves the C-terminal D-alanine residue of UDP-muramyl-pentapeptide (UDP-MurNAc-L-Ala-D-Glu-mDAP-D-Ala-D-Ala) or diacetyl-L-Lys-D-Ala-D-Ala. However the physiological substrate likely contains L-Lys instead of mDAP at the third position of the pentapeptide. Also releases the C-terminal D-lactate from UDP-MurNAc-L-Ala-D-Glu-mDAP-D-Ala-D-lactate, a depsipeptide produced by the vancomycin resistance protein VanA. Therefore, VanY should contribute in vivo to the hydrolysis of both the D-alanyl-D-alanine- and the depsipeptide-containing peptidoglycan precursors. Is not necessary for vancomycin resistance of E.faecium BM4147 and perhaps not W14-9. Does not display transpeptidase or beta-lactamase activities. This chain is D-alanyl-D-alanine carboxypeptidase, found in Enterococcus faecium (Streptococcus faecium).